Reading from the N-terminus, the 145-residue chain is Cystin-1 (145 aa).

The interval 1-129 (MGSGSSRSGR…PEGQSAISYD (129 aa)) is disordered. Gly2 carries N-myristoyl glycine lipidation. Residues 29-33 (ASEGG) carry the Ciliary targeting motif motif. Ser116 bears the Phosphoserine mark.

Interacts (when myristoylated) with UNC119 and UNC119B; interaction is required for localization to cilium. As to expression, expressed primarily in the kidney and liver. Expressed at lower levels in the lung, brain and heart.

The protein localises to the cell projection. It localises to the cilium membrane. Its subcellular location is the cytoplasm. The protein resides in the cytoskeleton. It is found in the cilium axoneme. The chain is Cystin-1 (Cys1) from Mus musculus (Mouse).